A 290-amino-acid polypeptide reads, in one-letter code: 4-diphosphocytidyl-2-C-methyl-D-erythritol kinase (290 aa).

Residue K12 is part of the active site. Position 97 to 107 (97 to 107 (PVASGIGGGSA)) interacts with ATP. D139 is a catalytic residue.

The protein belongs to the GHMP kinase family. IspE subfamily.

It carries out the reaction 4-CDP-2-C-methyl-D-erythritol + ATP = 4-CDP-2-C-methyl-D-erythritol 2-phosphate + ADP + H(+). It functions in the pathway isoprenoid biosynthesis; isopentenyl diphosphate biosynthesis via DXP pathway; isopentenyl diphosphate from 1-deoxy-D-xylulose 5-phosphate: step 3/6. Its function is as follows. Catalyzes the phosphorylation of the position 2 hydroxy group of 4-diphosphocytidyl-2C-methyl-D-erythritol. This Parvibaculum lavamentivorans (strain DS-1 / DSM 13023 / NCIMB 13966) protein is 4-diphosphocytidyl-2-C-methyl-D-erythritol kinase.